A 244-amino-acid chain; its full sequence is 5-oxoprolinase subunit A (244 aa).

It belongs to the LamB/PxpA family. Forms a complex composed of PxpA, PxpB and PxpC.

The catalysed reaction is 5-oxo-L-proline + ATP + 2 H2O = L-glutamate + ADP + phosphate + H(+). In terms of biological role, catalyzes the cleavage of 5-oxoproline to form L-glutamate coupled to the hydrolysis of ATP to ADP and inorganic phosphate. In Escherichia coli O7:K1 (strain IAI39 / ExPEC), this protein is 5-oxoprolinase subunit A.